The chain runs to 268 residues: Serine/arginine-rich splicing factor SR30 (268 aa).

2 RRM domains span residues arginine 7 to glycine 82 and tyrosine 109 to serine 187. Basic and acidic residues predominate over residues glutamate 186–serine 199. Residues glutamate 186–glycine 268 form a disordered region. A phosphoserine mark is found at serine 193, serine 210, serine 212, serine 214, serine 219, serine 221, serine 227, serine 236, serine 246, serine 256, and serine 260. The span at arginine 207 to glutamine 247 shows a compositional bias: low complexity. Positions arginine 257–glycine 268 are enriched in low complexity.

It belongs to the splicing factor SR family. SR subfamily. As to quaternary structure, component of the spliceosome. Interacts with SNRNP35, CYP59 and CYP63. Post-translationally, phosphorylated. As to expression, ubiquitous.

It localises to the nucleus speckle. It is found in the nucleus. Its subcellular location is the nucleoplasm. The protein resides in the cytoplasm. Functionally, regulatory splicing factor that modulates alternative splicing and gene expression in specific cell types. Autoregulates its own expression. Probably involved in intron recognition and spliceosome assembly. In Arabidopsis thaliana (Mouse-ear cress), this protein is Serine/arginine-rich splicing factor SR30 (SR30).